Here is a 407-residue protein sequence, read N- to C-terminus: Methylthioribose kinase (407 aa).

Residues asparagine 40, lysine 57, and 111-113 each bind ATP; that span reads EDL. Aspartate 229 provides a ligand contact to substrate. Residue 246–248 participates in ATP binding; it reads DAE. Arginine 344 is a substrate binding site.

This sequence belongs to the methylthioribose kinase family. As to quaternary structure, homodimer.

The catalysed reaction is 5-(methylsulfanyl)-D-ribose + ATP = 5-(methylsulfanyl)-alpha-D-ribose 1-phosphate + ADP + H(+). It functions in the pathway amino-acid biosynthesis; L-methionine biosynthesis via salvage pathway; S-methyl-5-thio-alpha-D-ribose 1-phosphate from S-methyl-5'-thioadenosine (hydrolase route): step 2/2. In terms of biological role, catalyzes the phosphorylation of methylthioribose into methylthioribose-1-phosphate. The polypeptide is Methylthioribose kinase (Yersinia pseudotuberculosis serotype O:3 (strain YPIII)).